The primary structure comprises 397 residues: Ubiquitin-like modifier-activating enzyme 5 (397 aa).

Residues Gly-77, Asp-98, Lys-121, Asn-144, and Asn-178 each coordinate ATP. Positions 220 and 223 each coordinate Zn(2+). Catalysis depends on Cys-244, which acts as the Glycyl thioester intermediate. Residues Cys-297 and Cys-302 each contribute to the Zn(2+) site. The UFM1-interacting sequence (UIS) signature appears at 329 to 341 (VVHEDNDWGIELV). The segment at 342 to 372 (SEVSEEELKAASGPVPDLPEGIKVAYTIPIT) is linker. Residues 382 to 397 (DSEQSLDELMAQMKNL) carry the UFC1-binding sequence (UFC) motif.

Belongs to the ubiquitin-activating E1 family. UBA5 subfamily. In terms of assembly, homodimer; homodimerization is required for ufm1 activation. Interacts (via UIS motif) with ufm1; binds ufm1 via a trans-binding mechanism in which ufm1 interacts with distinct sites in both subunits of the uba5 homodimer. Interacts (via C-terminus) with ufc1.

The protein resides in the cytoplasm. It is found in the nucleus. The protein localises to the endoplasmic reticulum membrane. It localises to the golgi apparatus. Functionally, E1-like enzyme which specifically catalyzes the first step in ufmylation. Activates ufm1 by first adenylating its C-terminal glycine residue with ATP, and thereafter linking this residue to the side chain of a cysteine residue in E1, yielding a ufm1-E1 thioester and free AMP. Activates ufm1 via a trans-binding mechanism, in which ufm1 interacts with distinct sites in both subunits of the uba5 homodimer. Trans-binding also promotes stabilization of the uba5 homodimer, and enhances ATP-binding. Transfer of ufm1 from uba5 to the E2-like enzyme UFC1 also takes place using a trans mechanism. Ufmylation plays a key role in various processes, such as ribosome recycling, response to DNA damage, interferon response or reticulophagy (also called ER-phagy). The polypeptide is Ubiquitin-like modifier-activating enzyme 5 (Xenopus laevis (African clawed frog)).